Consider the following 249-residue polypeptide: Zinc finger protein CG30 (249 aa).

Residues 8 to 66 (CHICCSVGEIKNYFLQPVDAITILPIVELHTCRHQLCVMCVRKIAQRGRDKRVECPMCR) form an RING-type zinc finger.

This chain is Zinc finger protein CG30 (CG30), found in Orgyia pseudotsugata (Douglas-fir tussock moth).